The chain runs to 592 residues: Testis-specific serine kinase substrate (592 aa).

At serine 217 the chain carries Phosphoserine. The disordered stretch occupies residues 232 to 308 (QDETPRRQEA…VPAGWGMGPR (77 aa)). Basic and acidic residues predominate over residues 234–264 (ETPRRQEAELQEPEEKQEPEEKQEPEEKQKP). Over residues 269-281 (SWNSLGPAATSQG) the composition is skewed to polar residues. The residue at position 288 (serine 288) is a Phosphoserine; by TSSK1 and TSSK2. Serine 316 carries the post-translational modification Phosphoserine. The tract at residues 566 to 592 (LEGSTGTMGGGSSAGTPPKQGGSAPEQ) is disordered.

Post-translationally, phosphorylated on serine residue(s) by STK22A/TSSK1 and STK22B/TSSK2. Highly expressed in testis. Expressed at low levels in prostate, female breast, placenta, ovary and thymus.

Its subcellular location is the cytoplasm. It is found in the cytoskeleton. The protein resides in the microtubule organizing center. The protein localises to the centrosome. It localises to the centriole. May play a role in testicular physiology, most probably in the process of spermatogenesis or spermatid development. The chain is Testis-specific serine kinase substrate (TSKS) from Homo sapiens (Human).